The following is a 750-amino-acid chain: 1,4-alpha-glucan branching enzyme GlgB (750 aa).

The active-site Nucleophile is Asp-425. The Proton donor role is filled by Glu-478.

The protein belongs to the glycosyl hydrolase 13 family. GlgB subfamily. As to quaternary structure, monomer.

The enzyme catalyses Transfers a segment of a (1-&gt;4)-alpha-D-glucan chain to a primary hydroxy group in a similar glucan chain.. It functions in the pathway glycan biosynthesis; glycogen biosynthesis. Functionally, catalyzes the formation of the alpha-1,6-glucosidic linkages in glycogen by scission of a 1,4-alpha-linked oligosaccharide from growing alpha-1,4-glucan chains and the subsequent attachment of the oligosaccharide to the alpha-1,6 position. This Cupriavidus pinatubonensis (strain JMP 134 / LMG 1197) (Cupriavidus necator (strain JMP 134)) protein is 1,4-alpha-glucan branching enzyme GlgB.